A 125-amino-acid chain; its full sequence is Large ribosomal subunit protein bL12 (125 aa).

The protein belongs to the bacterial ribosomal protein bL12 family. Homodimer. Part of the ribosomal stalk of the 50S ribosomal subunit. Forms a multimeric L10(L12)X complex, where L10 forms an elongated spine to which 2 to 4 L12 dimers bind in a sequential fashion. Binds GTP-bound translation factors.

Its function is as follows. Forms part of the ribosomal stalk which helps the ribosome interact with GTP-bound translation factors. Is thus essential for accurate translation. The chain is Large ribosomal subunit protein bL12 from Rhizobium johnstonii (strain DSM 114642 / LMG 32736 / 3841) (Rhizobium leguminosarum bv. viciae).